We begin with the raw amino-acid sequence, 457 residues long: Protein PIN-LIKES 2 (457 aa).

The Lumenal portion of the chain corresponds to 1–15 (MSGFSSGNVNSRVVD). Residues 16-36 (ILSGVVPLLKLICLTVIGLLL) traverse the membrane as a helical segment. The Cytoplasmic portion of the chain corresponds to 37 to 54 (AHPKTQLVPRATFRLLSK). Residues 55–75 (LVFALFLPCLIFTELGESITL) form a helical membrane-spanning segment. The Lumenal portion of the chain corresponds to 76-85 (DNIVQWWFIP). Residues 86–106 (VNVLLSAVVGSLIGYLVVLIC) form a helical membrane-spanning segment. Residues 107–116 (RPPPEFNRFT) lie on the Cytoplasmic side of the membrane. The chain crosses the membrane as a helical span at residues 117 to 137 (IVMTAFGNTGNLLLAIVSSVC). Residues 138 to 151 (HTKTNPFGPNCNSR) are Lumenal-facing. The helical transmembrane segment at 152–172 (GVSYVSFAQWVAVILVYTVVY) threads the bilayer. Residues 173–291 (HMMEPPLEYY…PVKHILQPPT (119 aa)) lie on the Cytoplasmic side of the membrane. The helical transmembrane segment at 292-312 (IASLLAIIIGSVPQLKSVVFG) threads the bilayer. Residues 313 to 322 (YDAPLSFITD) lie on the Lumenal side of the membrane. A helical membrane pass occupies residues 323 to 343 (SLNIMGSAMVPSVMLVLGGML). Residues 344–356 (SEGPNESTLGLRT) lie on the Cytoplasmic side of the membrane. The helical transmembrane segment at 357 to 377 (TIGISVARLLVLPLVGIGIVM) threads the bilayer. Residues 378–393 (SADKLGLISSADPMFK) lie on the Lumenal side of the membrane. Residues 394-414 (FVLLLQYSTPSAILLGAIASL) form a helical membrane-spanning segment. Topologically, residues 415-424 (RGYAVREASA) are cytoplasmic. A helical transmembrane segment spans residues 425 to 445 (LLFWQHIFALLSLTFYIVIFF). The Lumenal portion of the chain corresponds to 446-457 (KLTVETTVQGMQ).

Belongs to the auxin efflux carrier (TC 2.A.69.2) family. In terms of tissue distribution, expressed in seedlings, rosette and cauline leaves, flowers and siliques.

The protein localises to the endoplasmic reticulum membrane. In terms of biological role, involved in cellular auxin homeostasis by regulating auxin metabolism. Regulates intracellular auxin accumulation at the endoplasmic reticulum and thus auxin availability for nuclear auxin signaling. The protein is Protein PIN-LIKES 2 of Arabidopsis thaliana (Mouse-ear cress).